The following is a 158-amino-acid chain: Snaclec convulxin subunit alpha (158 aa).

A signal peptide spans 1–23 (MGRFIFVSFGLLVLFLSLSGTGA). 3 disulfide bridges follow: Cys-27–Cys-38, Cys-55–Cys-152, and Cys-127–Cys-144. One can recognise a C-type lectin domain in the interval 34-158 (YDQHCYRIFN…PFVCKFPPQC (125 aa)).

This sequence belongs to the snaclec family. Tetramer of heterodimers of alpha and beta subunits (alphabeta)(4); disulfide-linked. As to expression, expressed by the venom gland.

It is found in the secreted. In terms of biological role, snake venom lectin that activates platelets by binding to the platelet collagen receptor glycoprotein VI (GP6). The indirect activation of integrin alpha-IIb/beta-3 (ITGA2B/ITGB3) also induced by the toxin is upstream the cytoskeletal translocation of GPIb, FcRgamma (FCER1G) and 14-3-3zeta (YWHAZ). The protein is Snaclec convulxin subunit alpha of Crotalus durissus terrificus (South American rattlesnake).